We begin with the raw amino-acid sequence, 849 residues long: Protein lap1 (849 aa).

LRR repeat units lie at residues 18-39 (VIDKLDYSNTPLTDFPEVWQHE), 41-62 (TLEELYLSTTRLQALPPQLFYC), 64-85 (GLRVLHVNSNNLESIPQAIGSL), 87-108 (QLQHLDLNRNLIVNVPEEIKSC), 110-131 (HLTHLDLSCNSLQRLPDAITSL), 133-155 (SLQELLLNETYLEFLPANFGRLV), 156-177 (NLRILELRLNNLMTLPKSMVRL), 179-200 (NLQRLDIGGNEFTELPEVVGEL), 202-224 (SLRELWIDFNQIRRVSANIGKLR), 225-246 (DLQHFEANGNLLDTLPSELSNW), 248-269 (NVEVLSICSNSLEAFPFSVGML), 271-292 (SLVTFKCESNGLTELPDSISYL), 294-315 (QLEELVLSHNKLIRLPSTIGML), 317-338 (SLRFLFADDNQLRQLPDELCSC), 340-362 (QLSVLSVANNQLSALPQNIGNLS), 363-384 (KMKVLNVVNNYINALPVSMLNL), and 386-407 (NLTSMWLSDNQSQPLVPLQYLD). The interval 716-752 (NNISNNLEPNPEEEDQELDDTMSQHSLNSTATNNTSK) is disordered. The span at 725–735 (NPEEEDQELDD) shows a compositional bias: acidic residues. Over residues 736–752 (TMSQHSLNSTATNNTSK) the composition is skewed to polar residues. Residues 770–849 (VKQVTLKWEN…TVMNIMLSRK (80 aa)) form the PDZ domain.

Belongs to the LAP (LRR and PDZ) protein family.

May have a role in assembling adherens junctions. In Drosophila melanogaster (Fruit fly), this protein is Protein lap1.